Reading from the N-terminus, the 485-residue chain is Lysine--tRNA ligase (485 aa).

2 residues coordinate Mg(2+): glutamate 391 and glutamate 398.

This sequence belongs to the class-II aminoacyl-tRNA synthetase family. As to quaternary structure, homodimer. It depends on Mg(2+) as a cofactor.

The protein localises to the cytoplasm. The enzyme catalyses tRNA(Lys) + L-lysine + ATP = L-lysyl-tRNA(Lys) + AMP + diphosphate. The polypeptide is Lysine--tRNA ligase (Blochmanniella floridana).